The chain runs to 563 residues: Arginine--tRNA ligase (563 aa).

Positions 122 to 132 (PNIAKPISMGH) match the 'HIGH' region motif.

The protein belongs to the class-I aminoacyl-tRNA synthetase family. Monomer.

Its subcellular location is the cytoplasm. The enzyme catalyses tRNA(Arg) + L-arginine + ATP = L-arginyl-tRNA(Arg) + AMP + diphosphate. The sequence is that of Arginine--tRNA ligase from Enterococcus faecalis (strain ATCC 700802 / V583).